The sequence spans 358 residues: DNA polymerase IV (358 aa).

The 182-residue stretch at 4 to 185 (IIHIDMDCYF…LSLRKIPGVG (182 aa)) folds into the UmuC domain. Residues aspartate 8 and aspartate 103 each contribute to the Mg(2+) site. Glutamate 104 is a catalytic residue.

The protein belongs to the DNA polymerase type-Y family. In terms of assembly, monomer. It depends on Mg(2+) as a cofactor.

The protein resides in the cytoplasm. It catalyses the reaction DNA(n) + a 2'-deoxyribonucleoside 5'-triphosphate = DNA(n+1) + diphosphate. Its function is as follows. Poorly processive, error-prone DNA polymerase involved in untargeted mutagenesis. Copies undamaged DNA at stalled replication forks, which arise in vivo from mismatched or misaligned primer ends. These misaligned primers can be extended by PolIV. Exhibits no 3'-5' exonuclease (proofreading) activity. May be involved in translesional synthesis, in conjunction with the beta clamp from PolIII. The polypeptide is DNA polymerase IV (Shewanella baltica (strain OS195)).